We begin with the raw amino-acid sequence, 112 residues long: Putative movement protein (112 aa).

The helical transmembrane segment at 27-47 (IGIIMLCIVGIVVLWVLIILC) threads the bilayer. The interval 77–112 (TGTPFEETGPHRERRWAERRTEATNQNNNDNVNRFS) is disordered. A compositionally biased stretch (basic and acidic residues) spans 84 to 98 (TGPHRERRWAERRTE). Over residues 101–112 (NQNNNDNVNRFS) the composition is skewed to polar residues.

This sequence belongs to the nanovirus movement protein family.

It localises to the host cell membrane. In terms of biological role, may transport viral genome to neighboring plant cells directly through plasmosdesmata, without any budding. The movement protein allows efficient cell to cell propagation, by bypassing the host cell wall barrier. The chain is Putative movement protein (DNA-M) from Subterranean clover stunt virus (strain F) (SCSV).